Consider the following 175-residue polypeptide: Thioredoxin-like protein CITRX, chloroplastic (175 aa).

Residues 1-64 (MQAASLAFHP…KPPAVGKYVR (64 aa)) constitute a chloroplast transit peptide. One can recognise a Thioredoxin domain in the interval 74–175 (AKEIQELIKG…MMRDIIDNDL (102 aa)). Catalysis depends on nucleophile residues Cys98 and Cys101. Residues Cys98 and Cys101 are joined by a disulfide bond.

This sequence belongs to the thioredoxin family. Plant CITRX-type subfamily. As to quaternary structure, interacts with Cf-9 resistance protein.

It is found in the plastid. The protein localises to the chloroplast. Its function is as follows. Probable thiol-disulfide oxidoreductase that may play a role in proper chloroplast development. This Solanum lycopersicum (Tomato) protein is Thioredoxin-like protein CITRX, chloroplastic.